The chain runs to 78 residues: Beta-defensin 105 (78 aa).

An N-terminal signal peptide occupies residues Met1 to Ala27. Disulfide bonds link Cys43–Cys74, Cys53–Cys67, and Cys57–Cys73.

This sequence belongs to the beta-defensin family. In terms of tissue distribution, specifically expressed in testis.

It localises to the secreted. Has antibacterial activity. This chain is Beta-defensin 105 (DEFB105A), found in Homo sapiens (Human).